Here is a 289-residue protein sequence, read N- to C-terminus: Small ribosomal subunit protein uS2C (289 aa).

Belongs to the universal ribosomal protein uS2 family. As to quaternary structure, component of the small ribosomal subunit. Mature ribosomes consist of a small (40S) and a large (60S) subunit. The 40S subunit contains about 33 different proteins and 1 molecule of RNA (18S). The 60S subunit contains about 49 different proteins and 3 molecules of RNA (25S, 5.8S and 5S). Interacts with rps21.

Its subcellular location is the cytoplasm. Required for the assembly and/or stability of the 40S ribosomal subunit. Required for the processing of the 20S rRNA-precursor to mature 18S rRNA in a late step of the maturation of 40S ribosomal subunits. This is Small ribosomal subunit protein uS2C (rps0c) from Schizosaccharomyces japonicus (strain yFS275 / FY16936) (Fission yeast).